We begin with the raw amino-acid sequence, 769 residues long: Acetyl-coenzyme A carboxylase carboxyl transferase subunit alpha, chloroplastic (769 aa).

A chloroplast-targeting transit peptide spans 1–54 (MASISHSSLALGGASSASASDYLRSSSNGVNGVPLKTLGRAVFTTIRRKDLAVT). One can recognise a CoA carboxyltransferase C-terminal domain in the interval 132 to 385 (LENKYRQALK…KIAINENMNE (254 aa)). 2 coiled-coil regions span residues 426–504 (EAVF…ASSE) and 631–744 (KQNQ…SDGS). The segment at 718-769 (GLQEKQDELEKELAAARELAAEESDGSVKEDDDDDEDSSESGKSEMVNPSFA) is disordered. A compositionally biased stretch (basic and acidic residues) spans 721 to 732 (EKQDELEKELAA). The segment covering 738–756 (AEESDGSVKEDDDDDEDSS) has biased composition (acidic residues). Position 741 is a phosphoserine (serine 741).

Belongs to the AccA family. In terms of assembly, acetyl-CoA carboxylase is a heterohexamer composed of biotin carboxyl carrier protein, biotin carboxylase and two subunits each of ACCase subunit alpha and ACCase plastid-coded subunit beta (accD). In terms of tissue distribution, accumulates in fatty acids synthesizing tissues such as embryos, expanding leaves, flower buds, flowers, and developing siliques.

The protein resides in the plastid. It localises to the chloroplast inner membrane. It carries out the reaction N(6)-carboxybiotinyl-L-lysyl-[protein] + acetyl-CoA = N(6)-biotinyl-L-lysyl-[protein] + malonyl-CoA. Its pathway is lipid metabolism; malonyl-CoA biosynthesis; malonyl-CoA from acetyl-CoA: step 1/1. In terms of biological role, component of the acetyl coenzyme A carboxylase (ACC) complex. First, biotin carboxylase catalyzes the carboxylation of biotin on its carrier protein (BCCP) and then the CO(2) group is transferred by the carboxyltransferase to acetyl-CoA to form malonyl-CoA. In Arabidopsis thaliana (Mouse-ear cress), this protein is Acetyl-coenzyme A carboxylase carboxyl transferase subunit alpha, chloroplastic (CAC3).